Consider the following 315-residue polypeptide: Protease HtpX homolog (315 aa).

A helical transmembrane segment spans residues 16-36 (LFMGIGYLIGGASGALIALVV). Zn(2+) is bound at residue H130. The active site involves E131. H134 serves as a coordination point for Zn(2+). 2 helical membrane-spanning segments follow: residues 145–165 (ITAT…FFGG) and 172–192 (GPGL…AMLV). E201 contributes to the Zn(2+) binding site. The tract at residues 282-315 (GGGGASIGRPAGPSPRGAPRSPWSGQPRARGPWG) is disordered. A compositionally biased stretch (low complexity) spans 288–303 (IGRPAGPSPRGAPRSP).

Belongs to the peptidase M48B family. The cofactor is Zn(2+).

The protein resides in the cell inner membrane. This is Protease HtpX homolog from Rhodopseudomonas palustris (strain BisB5).